Reading from the N-terminus, the 318-residue chain is Probable arabinan endo-1,5-alpha-L-arabinosidase C (318 aa).

The first 28 residues, 1–28, serve as a signal peptide directing secretion; that stretch reads MLSFVLLLCVALVNAYSDPGACSGTCWA. The active-site Proton acceptor is Asp-30. Asn-72, Asn-80, and Asn-188 each carry an N-linked (GlcNAc...) asparagine glycan. The Proton donor role is filled by Glu-196. Asn-277 is a glycosylation site (N-linked (GlcNAc...) asparagine).

This sequence belongs to the glycosyl hydrolase 43 family.

It is found in the secreted. It carries out the reaction Endohydrolysis of (1-&gt;5)-alpha-arabinofuranosidic linkages in (1-&gt;5)-arabinans.. The protein operates within glycan metabolism; L-arabinan degradation. Its function is as follows. Endo-1,5-alpha-L-arabinanase involved in degradation of pectin. Its preferred substrate is linear 1,5-alpha-L-arabinan. The polypeptide is Probable arabinan endo-1,5-alpha-L-arabinosidase C (abnC) (Aspergillus niger (strain ATCC MYA-4892 / CBS 513.88 / FGSC A1513)).